Reading from the N-terminus, the 137-residue chain is ATP synthase epsilon chain (137 aa).

The protein belongs to the ATPase epsilon chain family. As to quaternary structure, F-type ATPases have 2 components, CF(1) - the catalytic core - and CF(0) - the membrane proton channel. CF(1) has five subunits: alpha(3), beta(3), gamma(1), delta(1), epsilon(1). CF(0) has three main subunits: a, b and c.

It localises to the cell membrane. Functionally, produces ATP from ADP in the presence of a proton gradient across the membrane. The chain is ATP synthase epsilon chain from Caldicellulosiruptor saccharolyticus (strain ATCC 43494 / DSM 8903 / Tp8T 6331).